The sequence spans 496 residues: Glycerol kinase (496 aa).

T12 contacts ADP. ATP is bound by residues T12, T13, and S14. T12 contacts sn-glycerol 3-phosphate. R16 lines the ADP pocket. Sn-glycerol 3-phosphate contacts are provided by R82, E83, and Y134. Residues R82, E83, and Y134 each contribute to the glycerol site. H230 is subject to Phosphohistidine; by HPr. D244 provides a ligand contact to sn-glycerol 3-phosphate. D244 and Q245 together coordinate glycerol. Positions 266 and 309 each coordinate ADP. ATP contacts are provided by T266, G309, Q313, and G410. G410 and N414 together coordinate ADP.

Belongs to the FGGY kinase family. In terms of assembly, homotetramer and homodimer (in equilibrium). Post-translationally, the phosphoenolpyruvate-dependent sugar phosphotransferase system (PTS), including enzyme I, and histidine-containing protein (HPr) are required for the phosphorylation, which leads to the activation of the enzyme.

It carries out the reaction glycerol + ATP = sn-glycerol 3-phosphate + ADP + H(+). The protein operates within polyol metabolism; glycerol degradation via glycerol kinase pathway; sn-glycerol 3-phosphate from glycerol: step 1/1. With respect to regulation, activated by phosphorylation and inhibited by fructose 1,6-bisphosphate (FBP). Functionally, key enzyme in the regulation of glycerol uptake and metabolism. Catalyzes the phosphorylation of glycerol to yield sn-glycerol 3-phosphate. In Bacillus subtilis (strain 168), this protein is Glycerol kinase.